A 359-amino-acid polypeptide reads, in one-letter code: MKTLNLDLQEKSYPIYIGQDLLSEGKLLTKHISGKQVMIVTNTTVAPLYLEKVQNLLLSFEFAQVILPDGEKYKTLDTLNCIFNALLKNRFDRSCTLIALGGGVVGDMTGFAAASYQRGVNFIQIPTTLLSQVDSSVGGKTGINHVLGKNMIGIFHQPKCVLIDIDTLDTLNNQQYSAGMAEVIKYGLLGHLNFFNFLQENIRDLMDRNKPLMAEIIYQSCQYKINIVVQDELEVGKRALLNLGHTFGHVIENILGYGIFLHGEAISVGMLMAVKLSHLEGYLSINQVAQVQDLLEKANLPIFIIGKISASDFMKVMLVDKKVINGNIRLILLKELGHAFVCNHYKDQLLNQVINEFCQ.

Residues 69 to 74 (DGEKYK), 103 to 107 (GVVGD), 127 to 128 (TT), Lys140, Lys149, and 167 to 170 (TLDT) contribute to the NAD(+) site. Zn(2+) contacts are provided by Glu182, His245, and His262.

It belongs to the sugar phosphate cyclases superfamily. Dehydroquinate synthase family. Co(2+) serves as cofactor. The cofactor is Zn(2+). It depends on NAD(+) as a cofactor.

The protein resides in the cytoplasm. It carries out the reaction 7-phospho-2-dehydro-3-deoxy-D-arabino-heptonate = 3-dehydroquinate + phosphate. It participates in metabolic intermediate biosynthesis; chorismate biosynthesis; chorismate from D-erythrose 4-phosphate and phosphoenolpyruvate: step 2/7. Functionally, catalyzes the conversion of 3-deoxy-D-arabino-heptulosonate 7-phosphate (DAHP) to dehydroquinate (DHQ). This chain is 3-dehydroquinate synthase, found in Ruthia magnifica subsp. Calyptogena magnifica.